Consider the following 389-residue polypeptide: LL-diaminopimelate aminotransferase (389 aa).

Tyrosine 13 and glycine 38 together coordinate substrate. Pyridoxal 5'-phosphate is bound by residues tyrosine 67, 101 to 102 (SK), tyrosine 126, asparagine 176, tyrosine 207, and 235 to 237 (SLS). Substrate is bound by residues lysine 102, tyrosine 126, and asparagine 176. An N6-(pyridoxal phosphate)lysine modification is found at lysine 238. Arginine 246 is a pyridoxal 5'-phosphate binding site. A substrate-binding site is contributed by arginine 364.

It belongs to the class-I pyridoxal-phosphate-dependent aminotransferase family. LL-diaminopimelate aminotransferase subfamily. In terms of assembly, homodimer. It depends on pyridoxal 5'-phosphate as a cofactor.

The enzyme catalyses (2S,6S)-2,6-diaminopimelate + 2-oxoglutarate = (S)-2,3,4,5-tetrahydrodipicolinate + L-glutamate + H2O + H(+). The protein operates within amino-acid biosynthesis; L-lysine biosynthesis via DAP pathway; LL-2,6-diaminopimelate from (S)-tetrahydrodipicolinate (aminotransferase route): step 1/1. Functionally, involved in the synthesis of meso-diaminopimelate (m-DAP or DL-DAP), required for both lysine and peptidoglycan biosynthesis. Catalyzes the direct conversion of tetrahydrodipicolinate to LL-diaminopimelate. This chain is LL-diaminopimelate aminotransferase, found in Halothermothrix orenii (strain H 168 / OCM 544 / DSM 9562).